Reading from the N-terminus, the 351-residue chain is L-threonine 3-dehydrogenase (351 aa).

C39 contributes to the Zn(2+) binding site. Active-site charge relay system residues include T41 and H44. Zn(2+) is bound by residues H64, E65, C94, C97, C100, and C108. Residues I176, D196, R201, L271–I273, and I295–Y296 contribute to the NAD(+) site.

It belongs to the zinc-containing alcohol dehydrogenase family. As to quaternary structure, homotetramer. Zn(2+) serves as cofactor.

It localises to the cytoplasm. The enzyme catalyses L-threonine + NAD(+) = (2S)-2-amino-3-oxobutanoate + NADH + H(+). It functions in the pathway amino-acid degradation; L-threonine degradation via oxydo-reductase pathway; glycine from L-threonine: step 1/2. Catalyzes the NAD(+)-dependent oxidation of L-threonine to 2-amino-3-ketobutyrate. The protein is L-threonine 3-dehydrogenase of Francisella philomiragia subsp. philomiragia (strain ATCC 25017 / CCUG 19701 / FSC 153 / O#319-036).